The chain runs to 103 residues: Large ribosomal subunit protein bL21 (103 aa).

Basic residues predominate over residues 83-92 (YRRKKGHRQP). Residues 83–103 (YRRKKGHRQPFSRVTVEKIEA) are disordered.

This sequence belongs to the bacterial ribosomal protein bL21 family. As to quaternary structure, part of the 50S ribosomal subunit. Contacts protein L20.

In terms of biological role, this protein binds to 23S rRNA in the presence of protein L20. This is Large ribosomal subunit protein bL21 from Pelotomaculum thermopropionicum (strain DSM 13744 / JCM 10971 / SI).